Here is a 388-residue protein sequence, read N- to C-terminus: Succinate--CoA ligase [ADP-forming] subunit beta (388 aa).

Positions 9–245 (KELLAKYGLP…KSQENERELK (237 aa)) constitute an ATP-grasp domain. ATP-binding positions include lysine 46, 53–55 (GRG), glutamate 100, tyrosine 103, and glutamate 108. The Mg(2+) site is built by asparagine 200 and aspartate 214. Substrate-binding positions include asparagine 265 and 322–324 (GIV).

It belongs to the succinate/malate CoA ligase beta subunit family. As to quaternary structure, heterotetramer of two alpha and two beta subunits. Mg(2+) is required as a cofactor.

It carries out the reaction succinate + ATP + CoA = succinyl-CoA + ADP + phosphate. It catalyses the reaction GTP + succinate + CoA = succinyl-CoA + GDP + phosphate. Its pathway is carbohydrate metabolism; tricarboxylic acid cycle; succinate from succinyl-CoA (ligase route): step 1/1. Functionally, succinyl-CoA synthetase functions in the citric acid cycle (TCA), coupling the hydrolysis of succinyl-CoA to the synthesis of either ATP or GTP and thus represents the only step of substrate-level phosphorylation in the TCA. The beta subunit provides nucleotide specificity of the enzyme and binds the substrate succinate, while the binding sites for coenzyme A and phosphate are found in the alpha subunit. This chain is Succinate--CoA ligase [ADP-forming] subunit beta, found in Laribacter hongkongensis (strain HLHK9).